Reading from the N-terminus, the 353-residue chain is Pleckstrin-2 (353 aa).

N-acetylmethionine is present on Met1. Residues Gly4 to His104 enclose the PH 1 domain. Ser120 carries the phosphoserine modification. One can recognise a DEP domain in the interval Thr139–Glu225. One can recognise a PH 2 domain in the interval Thr247–Thr353.

Ubiquitous. Most abundant in the thymus, large bowel, small bowel, stomach, and prostate.

The protein resides in the cell projection. It localises to the lamellipodium membrane. Its subcellular location is the cytoplasm. It is found in the cytoskeleton. In terms of biological role, may help orchestrate cytoskeletal arrangement. Contribute to lamellipodia formation. Overexpression of pleckstrin 2 causes large lamellipodia and peripheral ruffle formation. The protein is Pleckstrin-2 (Plek2) of Mus musculus (Mouse).